The primary structure comprises 481 residues: Protein nucleotidyltransferase YdiU (481 aa).

Residues Gly-85, Gly-87, Arg-88, Lys-108, Asp-120, Gly-121, Arg-171, and Arg-178 each coordinate ATP. Asp-248 functions as the Proton acceptor in the catalytic mechanism. Residues Asn-249 and Asp-258 each contribute to the Mg(2+) site. Asp-258 serves as a coordination point for ATP. The segment at 458 to 481 (HPGLAEFQQPPTPEQKGLQLSCSS) is disordered.

Belongs to the SELO family. Mg(2+) serves as cofactor. Requires Mn(2+) as cofactor.

It catalyses the reaction L-seryl-[protein] + ATP = 3-O-(5'-adenylyl)-L-seryl-[protein] + diphosphate. It carries out the reaction L-threonyl-[protein] + ATP = 3-O-(5'-adenylyl)-L-threonyl-[protein] + diphosphate. The catalysed reaction is L-tyrosyl-[protein] + ATP = O-(5'-adenylyl)-L-tyrosyl-[protein] + diphosphate. The enzyme catalyses L-histidyl-[protein] + UTP = N(tele)-(5'-uridylyl)-L-histidyl-[protein] + diphosphate. It catalyses the reaction L-seryl-[protein] + UTP = O-(5'-uridylyl)-L-seryl-[protein] + diphosphate. It carries out the reaction L-tyrosyl-[protein] + UTP = O-(5'-uridylyl)-L-tyrosyl-[protein] + diphosphate. Nucleotidyltransferase involved in the post-translational modification of proteins. It can catalyze the addition of adenosine monophosphate (AMP) or uridine monophosphate (UMP) to a protein, resulting in modifications known as AMPylation and UMPylation. This Hydrogenovibrio crunogenus (strain DSM 25203 / XCL-2) (Thiomicrospira crunogena) protein is Protein nucleotidyltransferase YdiU.